Here is a 337-residue protein sequence, read N- to C-terminus: DNA-directed RNA polymerase subunit alpha (337 aa).

An alpha N-terminal domain (alpha-NTD) region spans residues 1–233 (MIQKNWQELI…DQLSLFVNFE (233 aa)). The interval 249–337 (FNPALLKKVD…DLAKRYEDQY (89 aa)) is alpha C-terminal domain (alpha-CTD).

It belongs to the RNA polymerase alpha chain family. As to quaternary structure, homodimer. The RNAP catalytic core consists of 2 alpha, 1 beta, 1 beta' and 1 omega subunit. When a sigma factor is associated with the core the holoenzyme is formed, which can initiate transcription.

It carries out the reaction RNA(n) + a ribonucleoside 5'-triphosphate = RNA(n+1) + diphosphate. In terms of biological role, DNA-dependent RNA polymerase catalyzes the transcription of DNA into RNA using the four ribonucleoside triphosphates as substrates. This Bartonella quintana (strain Toulouse) (Rochalimaea quintana) protein is DNA-directed RNA polymerase subunit alpha.